The primary structure comprises 325 residues: Glutarate 2-hydroxylase (325 aa).

Fe cation contacts are provided by His160, Asp162, and His292.

The protein belongs to the glutarate hydroxylase family. In terms of assembly, homotetramer. Requires Fe(2+) as cofactor.

The enzyme catalyses glutarate + 2-oxoglutarate + O2 = (S)-2-hydroxyglutarate + succinate + CO2. Its pathway is amino-acid degradation. Acts as an alpha-ketoglutarate-dependent dioxygenase catalyzing hydroxylation of glutarate (GA) to L-2-hydroxyglutarate (L2HG). Functions in a L-lysine degradation pathway that proceeds via cadaverine, glutarate and L-2-hydroxyglutarate. This Escherichia coli (strain 55989 / EAEC) protein is Glutarate 2-hydroxylase.